Consider the following 172-residue polypeptide: Large ribosomal subunit protein uL10 (172 aa).

Belongs to the universal ribosomal protein uL10 family. In terms of assembly, part of the ribosomal stalk of the 50S ribosomal subunit. The N-terminus interacts with L11 and the large rRNA to form the base of the stalk. The C-terminus forms an elongated spine to which L12 dimers bind in a sequential fashion forming a multimeric L10(L12)X complex.

Functionally, forms part of the ribosomal stalk, playing a central role in the interaction of the ribosome with GTP-bound translation factors. This is Large ribosomal subunit protein uL10 from Methylobacterium radiotolerans (strain ATCC 27329 / DSM 1819 / JCM 2831 / NBRC 15690 / NCIMB 10815 / 0-1).